The chain runs to 228 residues: Type II methyltransferase M.HhaII (228 aa).

Belongs to the N(4)/N(6)-methyltransferase family.

It carries out the reaction a 2'-deoxyadenosine in DNA + S-adenosyl-L-methionine = an N(6)-methyl-2'-deoxyadenosine in DNA + S-adenosyl-L-homocysteine + H(+). Functionally, a beta subtype methylase, recognizes the double-stranded sequence 5'-GANTC-3', methylates A-2 on both strands, and protects the DNA from cleavage by the HhaII endonuclease. This is Type II methyltransferase M.HhaII from Haemophilus parahaemolyticus.